Reading from the N-terminus, the 115-residue chain is Large ribosomal subunit protein uL18 (115 aa).

The interval 1-24 (MISKPDKNKLRQKRHTRVRGKISG) is disordered. The span at 10–20 (LRQKRHTRVRG) shows a compositional bias: basic residues.

It belongs to the universal ribosomal protein uL18 family. Part of the 50S ribosomal subunit; part of the 5S rRNA/L5/L18/L25 subcomplex. Contacts the 5S and 23S rRNAs.

Functionally, this is one of the proteins that bind and probably mediate the attachment of the 5S RNA into the large ribosomal subunit, where it forms part of the central protuberance. The chain is Large ribosomal subunit protein uL18 from Lactococcus lactis subsp. cremoris (strain MG1363).